Here is a 242-residue protein sequence, read N- to C-terminus: Venom nerve growth factor 1 (242 aa).

An N-terminal signal peptide occupies residues M1 to A18. A propeptide spanning residues A19–R125 is cleaved from the precursor. Cystine bridges form between C139–C203, C181–C231, and C191–C233.

Belongs to the NGF-beta family. In terms of assembly, homodimer; non-covalently linked. In terms of tissue distribution, expressed by the venom gland.

The protein localises to the secreted. Nerve growth factor is important for the development and maintenance of the sympathetic and sensory nervous systems. It stimulates division and differentiation of sympathetic and embryonic sensory neurons as well as basal forebrain cholinergic neurons in the brain. Its relevance in the snake venom is not clear. However, it has been shown to inhibit metalloproteinase-dependent proteolysis of platelet glycoprotein Ib alpha, suggesting a metalloproteinase inhibition to prevent metalloprotease autodigestion and/or protection against prey proteases. Binds a lipid between the two protein chains in the homodimer. The lipid-bound form promotes histamine relase from mouse mast cells, contrary to the lipid-free form. The polypeptide is Venom nerve growth factor 1 (Pseudechis australis (Mulga snake)).